We begin with the raw amino-acid sequence, 374 residues long: Succinyl-diaminopimelate desuccinylase (374 aa).

A Zn(2+)-binding site is contributed by H66. D68 is a catalytic residue. D99 contributes to the Zn(2+) binding site. Catalysis depends on E133, which acts as the Proton acceptor. Positions 134, 162, and 348 each coordinate Zn(2+).

Belongs to the peptidase M20A family. DapE subfamily. In terms of assembly, homodimer. It depends on Zn(2+) as a cofactor. Requires Co(2+) as cofactor.

It catalyses the reaction N-succinyl-(2S,6S)-2,6-diaminopimelate + H2O = (2S,6S)-2,6-diaminopimelate + succinate. It participates in amino-acid biosynthesis; L-lysine biosynthesis via DAP pathway; LL-2,6-diaminopimelate from (S)-tetrahydrodipicolinate (succinylase route): step 3/3. In terms of biological role, catalyzes the hydrolysis of N-succinyl-L,L-diaminopimelic acid (SDAP), forming succinate and LL-2,6-diaminopimelate (DAP), an intermediate involved in the bacterial biosynthesis of lysine and meso-diaminopimelic acid, an essential component of bacterial cell walls. This chain is Succinyl-diaminopimelate desuccinylase, found in Coxiella burnetii (strain RSA 331 / Henzerling II).